A 119-amino-acid chain; its full sequence is Ribonuclease P protein component (119 aa).

Belongs to the RnpA family. Consists of a catalytic RNA component (M1 or rnpB) and a protein subunit.

The catalysed reaction is Endonucleolytic cleavage of RNA, removing 5'-extranucleotides from tRNA precursor.. In terms of biological role, RNaseP catalyzes the removal of the 5'-leader sequence from pre-tRNA to produce the mature 5'-terminus. It can also cleave other RNA substrates such as 4.5S RNA. The protein component plays an auxiliary but essential role in vivo by binding to the 5'-leader sequence and broadening the substrate specificity of the ribozyme. This is Ribonuclease P protein component from Salmonella arizonae (strain ATCC BAA-731 / CDC346-86 / RSK2980).